The chain runs to 208 residues: ATP-dependent Clp protease proteolytic subunit (208 aa).

Ser98 serves as the catalytic Nucleophile. His123 is a catalytic residue.

It belongs to the peptidase S14 family. Fourteen ClpP subunits assemble into 2 heptameric rings which stack back to back to give a disk-like structure with a central cavity, resembling the structure of eukaryotic proteasomes.

It localises to the cytoplasm. It catalyses the reaction Hydrolysis of proteins to small peptides in the presence of ATP and magnesium. alpha-casein is the usual test substrate. In the absence of ATP, only oligopeptides shorter than five residues are hydrolyzed (such as succinyl-Leu-Tyr-|-NHMec, and Leu-Tyr-Leu-|-Tyr-Trp, in which cleavage of the -Tyr-|-Leu- and -Tyr-|-Trp bonds also occurs).. In terms of biological role, cleaves peptides in various proteins in a process that requires ATP hydrolysis. Has a chymotrypsin-like activity. Plays a major role in the degradation of misfolded proteins. The chain is ATP-dependent Clp protease proteolytic subunit from Wolbachia pipientis subsp. Culex pipiens (strain wPip).